The following is a 333-amino-acid chain: Photosystem II assembly lipoprotein Ycf48 (333 aa).

The signal sequence occupies residues 1–23 (MNRLLSSAVNLLLVLVLGVGLSG). Cys24 carries the N-palmitoyl cysteine lipid modification. Residue Cys24 is the site of S-diacylglycerol cysteine attachment.

This sequence belongs to the Ycf48 family. Part of early PSII assembly complexes which includes D1 (psbA) and PsbI; not found in mature PSII. Binds to the lumenal side of PSII complexes. Interacts with YidC.

It localises to the cellular thylakoid membrane. In terms of biological role, a factor required for optimal assembly of photosystem II (PSII), acting in the early stages of PSII assembly. Also plays a role in replacement of photodamaged D1 (psbA). Assists YidC in synthesis of chlorophyll-binding proteins. This Synechococcus sp. (strain CC9902) protein is Photosystem II assembly lipoprotein Ycf48.